Consider the following 308-residue polypeptide: Transaldolase (308 aa).

K125 serves as the catalytic Schiff-base intermediate with substrate.

It belongs to the transaldolase family. Type 1 subfamily. In terms of assembly, homodimer.

The protein resides in the cytoplasm. It carries out the reaction D-sedoheptulose 7-phosphate + D-glyceraldehyde 3-phosphate = D-erythrose 4-phosphate + beta-D-fructose 6-phosphate. Its pathway is carbohydrate degradation; pentose phosphate pathway; D-glyceraldehyde 3-phosphate and beta-D-fructose 6-phosphate from D-ribose 5-phosphate and D-xylulose 5-phosphate (non-oxidative stage): step 2/3. Transaldolase is important for the balance of metabolites in the pentose-phosphate pathway. The polypeptide is Transaldolase (Pseudomonas fluorescens (strain Pf0-1)).